Consider the following 207-residue polypeptide: Small ribosomal subunit protein uS4 (207 aa).

The segment at 33–54 is disordered; sequence KLDSKPGQHGRTSGARTSDYGN. The span at 42–53 shows a compositional bias: polar residues; it reads GRTSGARTSDYG. The 64-residue stretch at 97-160 folds into the S4 RNA-binding domain; that stretch reads SRLDNVVYRM…KKQVRIAEAL (64 aa).

This sequence belongs to the universal ribosomal protein uS4 family. In terms of assembly, part of the 30S ribosomal subunit. Contacts protein S5. The interaction surface between S4 and S5 is involved in control of translational fidelity.

One of the primary rRNA binding proteins, it binds directly to 16S rRNA where it nucleates assembly of the body of the 30S subunit. In terms of biological role, with S5 and S12 plays an important role in translational accuracy. This Cupriavidus necator (strain ATCC 17699 / DSM 428 / KCTC 22496 / NCIMB 10442 / H16 / Stanier 337) (Ralstonia eutropha) protein is Small ribosomal subunit protein uS4.